The chain runs to 187 residues: GTP cyclohydrolase 1 (187 aa).

Residues cysteine 76, histidine 79, and cysteine 148 each contribute to the Zn(2+) site.

It belongs to the GTP cyclohydrolase I family. Homomer.

The catalysed reaction is GTP + H2O = 7,8-dihydroneopterin 3'-triphosphate + formate + H(+). It participates in cofactor biosynthesis; 7,8-dihydroneopterin triphosphate biosynthesis; 7,8-dihydroneopterin triphosphate from GTP: step 1/1. This is GTP cyclohydrolase 1 from Streptococcus gordonii (strain Challis / ATCC 35105 / BCRC 15272 / CH1 / DL1 / V288).